The following is a 480-amino-acid chain: Acetyl-coenzyme A carboxylase carboxyl transferase subunit beta, chloroplastic (480 aa).

The tract at residues 25–48 is disordered; the sequence is TSSLGPIENASESKDPNINDTDKN. The segment covering 35 to 47 has biased composition (basic and acidic residues); sequence SESKDPNINDTDK. The 265-residue stretch at 216–480 folds into the CoA carboxyltransferase N-terminal domain; it reads LWVQCENCYG…LHTFFPLNQN (265 aa). 4 residues coordinate Zn(2+): Cys220, Cys223, Cys239, and Cys242. The segment at 220–242 adopts a C4-type zinc-finger fold; that stretch reads CENCYGLNYKKFFKSKMNLCEQC.

Belongs to the AccD/PCCB family. In terms of assembly, acetyl-CoA carboxylase is a heterohexamer composed of biotin carboxyl carrier protein, biotin carboxylase and 2 subunits each of ACCase subunit alpha and ACCase plastid-coded subunit beta (accD). Zn(2+) serves as cofactor.

The protein resides in the plastid. It localises to the chloroplast stroma. The enzyme catalyses N(6)-carboxybiotinyl-L-lysyl-[protein] + acetyl-CoA = N(6)-biotinyl-L-lysyl-[protein] + malonyl-CoA. It functions in the pathway lipid metabolism; malonyl-CoA biosynthesis; malonyl-CoA from acetyl-CoA: step 1/1. Component of the acetyl coenzyme A carboxylase (ACC) complex. Biotin carboxylase (BC) catalyzes the carboxylation of biotin on its carrier protein (BCCP) and then the CO(2) group is transferred by the transcarboxylase to acetyl-CoA to form malonyl-CoA. The sequence is that of Acetyl-coenzyme A carboxylase carboxyl transferase subunit beta, chloroplastic from Helianthus annuus (Common sunflower).